The chain runs to 310 residues: Ribosomal RNA small subunit methyltransferase H (310 aa).

Residues G35 to H37, D52, F79, D100, and Q107 each bind S-adenosyl-L-methionine.

Belongs to the methyltransferase superfamily. RsmH family.

It is found in the cytoplasm. It catalyses the reaction cytidine(1402) in 16S rRNA + S-adenosyl-L-methionine = N(4)-methylcytidine(1402) in 16S rRNA + S-adenosyl-L-homocysteine + H(+). Its function is as follows. Specifically methylates the N4 position of cytidine in position 1402 (C1402) of 16S rRNA. This Anaeromyxobacter dehalogenans (strain 2CP-1 / ATCC BAA-258) protein is Ribosomal RNA small subunit methyltransferase H.